The following is a 298-amino-acid chain: UDP-N-acetylenolpyruvoylglucosamine reductase (298 aa).

Residues 26–191 form the FAD-binding PCMH-type domain; the sequence is KTGGAADVFV…LDATFSLALE (166 aa). Arginine 170 is an active-site residue. The active-site Proton donor is the serine 220. The active site involves glutamate 290.

The protein belongs to the MurB family. FAD is required as a cofactor.

The protein localises to the cytoplasm. The catalysed reaction is UDP-N-acetyl-alpha-D-muramate + NADP(+) = UDP-N-acetyl-3-O-(1-carboxyvinyl)-alpha-D-glucosamine + NADPH + H(+). It functions in the pathway cell wall biogenesis; peptidoglycan biosynthesis. Functionally, cell wall formation. In Listeria monocytogenes serotype 4b (strain CLIP80459), this protein is UDP-N-acetylenolpyruvoylglucosamine reductase.